A 469-amino-acid polypeptide reads, in one-letter code: Phosphoenolpyruvate carboxylase (469 aa).

Belongs to the PEPCase type 2 family. As to quaternary structure, homotetramer. Requires Mg(2+) as cofactor.

The enzyme catalyses oxaloacetate + phosphate = phosphoenolpyruvate + hydrogencarbonate. In terms of biological role, catalyzes the irreversible beta-carboxylation of phosphoenolpyruvate (PEP) to form oxaloacetate (OAA), a four-carbon dicarboxylic acid source for the tricarboxylic acid cycle. This chain is Phosphoenolpyruvate carboxylase, found in Pyrococcus horikoshii (strain ATCC 700860 / DSM 12428 / JCM 9974 / NBRC 100139 / OT-3).